The sequence spans 417 residues: V-set and immunoglobulin domain-containing protein 8 (417 aa).

The N-terminal stretch at 1–21 (MGVRGALHLLLVCLSPALLSA) is a signal peptide. Ig-like V-type domains follow at residues 22–140 (VRIN…VIVT) and 145–256 (PAVP…VKVS). Residues 22-262 (VRINGDGQEV…VKVSDSQRVG (241 aa)) lie on the Extracellular side of the membrane. Intrachain disulfides connect Cys44–Cys125 and Cys166–Cys238. A helical membrane pass occupies residues 263-283 (MIVGAVLGSLLMLACLALGIW). The Cytoplasmic segment spans residues 284–417 (GLICCCCGGG…QRSCKDGLLV (134 aa)).

The protein resides in the membrane. The protein is V-set and immunoglobulin domain-containing protein 8 (Vsig8) of Mus musculus (Mouse).